Reading from the N-terminus, the 168-residue chain is MSAPIGATRAERWTLLAIGVASFELVAGALWIQLAWQEDPCPLCIIQRYLFLLIALFTFVAAAGGRRVALLRVLSLTTALAGAAVAVRHIYVQAHPGFSCGFDALQPVIDSLPPAHWLPPVFKVGGLCETLYPPILGLSLPMWALVGFSAIAVALGWRIRAQAVIRTA.

The Cytoplasmic portion of the chain corresponds to 1–14 (MSAPIGATRAERWT). The helical transmembrane segment at 15–31 (LLAIGVASFELVAGALW) threads the bilayer. At 32 to 49 (IQLAWQEDPCPLCIIQRY) the chain is on the periplasmic side. The cysteines at positions 41 and 44 are disulfide-linked. Residues 50-64 (LFLLIALFTFVAAAG) traverse the membrane as a helical segment. The Cytoplasmic segment spans residues 65–69 (GRRVA). A helical transmembrane segment spans residues 70–87 (LLRVLSLTTALAGAAVAV). The Periplasmic segment spans residues 88 to 142 (RHIYVQAHPGFSCGFDALQPVIDSLPPAHWLPPVFKVGGLCETLYPPILGLSLPM). Cys-100 and Cys-128 are oxidised to a cystine. A helical transmembrane segment spans residues 143-161 (WALVGFSAIAVALGWRIRA). Residues 162–168 (QAVIRTA) are Cytoplasmic-facing.

Belongs to the DsbB family.

It localises to the cell inner membrane. Required for disulfide bond formation in some periplasmic proteins. Acts by oxidizing the DsbA protein. In Burkholderia lata (strain ATCC 17760 / DSM 23089 / LMG 22485 / NCIMB 9086 / R18194 / 383), this protein is Disulfide bond formation protein B 2.